The sequence spans 324 residues: Lipoyl synthase (324 aa).

Positions 65, 70, 76, 91, 95, 98, and 302 each coordinate [4Fe-4S] cluster. In terms of domain architecture, Radical SAM core spans 77–291; it reads WEDREATFLI…AQYAEGLGFA (215 aa).

This sequence belongs to the radical SAM superfamily. Lipoyl synthase family. [4Fe-4S] cluster is required as a cofactor.

It localises to the cytoplasm. It carries out the reaction [[Fe-S] cluster scaffold protein carrying a second [4Fe-4S](2+) cluster] + N(6)-octanoyl-L-lysyl-[protein] + 2 oxidized [2Fe-2S]-[ferredoxin] + 2 S-adenosyl-L-methionine + 4 H(+) = [[Fe-S] cluster scaffold protein] + N(6)-[(R)-dihydrolipoyl]-L-lysyl-[protein] + 4 Fe(3+) + 2 hydrogen sulfide + 2 5'-deoxyadenosine + 2 L-methionine + 2 reduced [2Fe-2S]-[ferredoxin]. It functions in the pathway protein modification; protein lipoylation via endogenous pathway; protein N(6)-(lipoyl)lysine from octanoyl-[acyl-carrier-protein]: step 2/2. Functionally, catalyzes the radical-mediated insertion of two sulfur atoms into the C-6 and C-8 positions of the octanoyl moiety bound to the lipoyl domains of lipoate-dependent enzymes, thereby converting the octanoylated domains into lipoylated derivatives. The protein is Lipoyl synthase of Mycobacterium ulcerans (strain Agy99).